We begin with the raw amino-acid sequence, 236 residues long: Carbonyl reductase family member 4 (236 aa).

NADP(+)-binding positions include 11-14 (SRGI), 34-35 (RN), aspartate 55, and 82-84 (SAG). Serine 134 provides a ligand contact to substrate. Residues tyrosine 147, lysine 151, and 180–182 (IRT) contribute to the NADP(+) site. Catalysis depends on tyrosine 147, which acts as the Proton acceptor.

The protein belongs to the short-chain dehydrogenases/reductases (SDR) family. In terms of assembly, homotetramer (in vitro). Heterotetramer with HSD17B8; contains two molecules each of HSD17B8 and CBR4.

It is found in the mitochondrion matrix. It functions in the pathway lipid metabolism; fatty acid biosynthesis. Functionally, the heterotetramer with HSD17B8 has NADH-dependent 3-ketoacyl-acyl carrier protein reductase activity, and thereby plays a role in mitochondrial fatty acid biosynthesis. Within the heterotetramer, HSD17B8 binds NADH; CBR4 binds NADPD. The homotetramer has NADPH-dependent quinone reductase activity. Both homotetramer and the heterotetramer have broad in vitro substrate specificity and can reduce 9,10-phenanthrenequinone, 1,4-benzoquinone and various other o-quinones and p-quinones. This is Carbonyl reductase family member 4 (cbr4) from Xenopus laevis (African clawed frog).